Consider the following 123-residue polypeptide: Small ribosomal subunit protein uS12 (123 aa).

Aspartate 89 carries the post-translational modification 3-methylthioaspartic acid.

The protein belongs to the universal ribosomal protein uS12 family. In terms of assembly, part of the 30S ribosomal subunit. Contacts proteins S8 and S17. May interact with IF1 in the 30S initiation complex.

In terms of biological role, with S4 and S5 plays an important role in translational accuracy. Functionally, interacts with and stabilizes bases of the 16S rRNA that are involved in tRNA selection in the A site and with the mRNA backbone. Located at the interface of the 30S and 50S subunits, it traverses the body of the 30S subunit contacting proteins on the other side and probably holding the rRNA structure together. The combined cluster of proteins S8, S12 and S17 appears to hold together the shoulder and platform of the 30S subunit. The polypeptide is Small ribosomal subunit protein uS12 (Gluconobacter oxydans (strain 621H) (Gluconobacter suboxydans)).